A 209-amino-acid polypeptide reads, in one-letter code: ATP synthase subunit b', chloroplastic (209 aa).

Residues 1-62 (MASLLARPQQ…NALMAMPAAA (62 aa)) constitute a chloroplast transit peptide. Residues 67–87 (IFDFNLTLPVMAGEFLLLMVF) traverse the membrane as a helical segment.

It belongs to the ATPase B chain family. As to quaternary structure, F-type ATPases have 2 components, F(1) - the catalytic core - and F(0) - the membrane proton channel. F(1) has five subunits: alpha(3), beta(3), gamma(1), delta(1), epsilon(1). F(0) has four main subunits: a(1), b(1), b'(1) and c(10-14). The alpha and beta chains form an alternating ring which encloses part of the gamma chain. F(1) is attached to F(0) by a central stalk formed by the gamma and epsilon chains, while a peripheral stalk is formed by the delta, b and b' chains.

The protein resides in the plastid. Its subcellular location is the chloroplast thylakoid membrane. F(1)F(0) ATP synthase produces ATP from ADP in the presence of a proton or sodium gradient. F-type ATPases consist of two structural domains, F(1) containing the extramembraneous catalytic core and F(0) containing the membrane proton channel, linked together by a central stalk and a peripheral stalk. During catalysis, ATP synthesis in the catalytic domain of F(1) is coupled via a rotary mechanism of the central stalk subunits to proton translocation. Functionally, component of the F(0) channel, it forms part of the peripheral stalk, linking F(1) to F(0). The b'-subunit is a diverged and duplicated form of b found in plants and photosynthetic bacteria. This chain is ATP synthase subunit b', chloroplastic, found in Chlamydomonas reinhardtii (Chlamydomonas smithii).